The chain runs to 528 residues: Na(+)/H(+) antiporter NhaB (528 aa).

A run of 10 helical transmembrane segments spans residues 28–50 (FLVI…VLVV), 67–87 (PGGL…SQVL), 98–118 (LLLV…LFVF), 140–160 (AFLS…AVAV), 240–260 (FFLR…FTCF), 305–325 (ALIG…VGLI), 350–370 (EEAL…GVII), 391–411 (LVIF…VFVG), 449–469 (ATPN…APLI), and 476–496 (MVWM…MAIE).

The protein belongs to the NhaB Na(+)/H(+) (TC 2.A.34) antiporter family.

The protein localises to the cell inner membrane. The catalysed reaction is 2 Na(+)(in) + 3 H(+)(out) = 2 Na(+)(out) + 3 H(+)(in). Its function is as follows. Na(+)/H(+) antiporter that extrudes sodium in exchange for external protons. In Shewanella frigidimarina (strain NCIMB 400), this protein is Na(+)/H(+) antiporter NhaB.